The chain runs to 201 residues: Recombination protein RecR (201 aa).

A C4-type zinc finger spans residues 58 to 73 (CPECGLLTEEERCGLC). Residues 81–176 (TLLCVVESSA…RTTRIAHGVP (96 aa)) form the Toprim domain.

The protein belongs to the RecR family.

In terms of biological role, may play a role in DNA repair. It seems to be involved in an RecBC-independent recombinational process of DNA repair. It may act with RecF and RecO. The sequence is that of Recombination protein RecR from Halorhodospira halophila (strain DSM 244 / SL1) (Ectothiorhodospira halophila (strain DSM 244 / SL1)).